The primary structure comprises 295 residues: Proline-rich proteoglycan 2 (295 aa).

The signal sequence occupies residues 1–16 (MLVVLLTAALLVLSSA). A disordered region spans residues 16-295 (AQGVDEEVVY…QSSFLWSFSA (280 aa)). Positions 26 to 41 (EDSSQQLELEQQSQGH) are enriched in low complexity. Residues 48–58 (PPPGGLPPRPP) are compositionally biased toward pro residues. The segment covering 62-78 (ENGDGDDNDDGDDDGSG) has biased composition (acidic residues). 2 stretches are compositionally biased toward pro residues: residues 100-187 (PPPA…PPGG) and 194-278 (QGPP…PQGP).

Contains glycosaminoglycans of chondroitin-sulfate and heparan types.

It is found in the secreted. This is Proline-rich proteoglycan 2 (Prpg2) from Rattus norvegicus (Rat).